Consider the following 407-residue polypeptide: Tryptophan synthase beta chain (407 aa).

The residue at position 91 (Lys-91) is an N6-(pyridoxal phosphate)lysine.

Belongs to the TrpB family. In terms of assembly, tetramer of two alpha and two beta chains. Pyridoxal 5'-phosphate serves as cofactor.

It catalyses the reaction (1S,2R)-1-C-(indol-3-yl)glycerol 3-phosphate + L-serine = D-glyceraldehyde 3-phosphate + L-tryptophan + H2O. It participates in amino-acid biosynthesis; L-tryptophan biosynthesis; L-tryptophan from chorismate: step 5/5. In terms of biological role, the beta subunit is responsible for the synthesis of L-tryptophan from indole and L-serine. The polypeptide is Tryptophan synthase beta chain (Streptococcus pneumoniae (strain P1031)).